Consider the following 98-residue polypeptide: Serine rich endogenous peptide 10 (98 aa).

The first 29 residues, 1–29 (MERKKFSSKFIHLLIVFLLLCTFLSRTES), serve as a signal peptide directing secretion. The segment at 50-98 (NSAIGTPSSTSDHAPGSNGRKLMSIYRPNGDIFTGPSGSGHGGGRTPAP) is disordered. Residues 52 to 61 (AIGTPSSTSD) are compositionally biased toward polar residues. 2 consecutive short sequence motifs (SCOOP motif) follow at residues 52–66 (AIGT…APGS) and 80–94 (DIFT…GGGR). 2 short sequence motifs (sxS motif essential for MIK2 binding) span residues 58-60 (STS) and 86-88 (SGS). Positions 86–98 (SGSGHGGGRTPAP) are enriched in gly residues.

Belongs to the serine rich endogenous peptide (SCOOP) phytocytokine family. As to quaternary structure, interacts with MIK2 (via extracellular leucine-rich repeat domain); this interaction triggers the formation of complex between MIK2 and the BAK1/SERK3 and SERK4 coreceptors, and subsequent BAK1 activation by phosphorylation. As to expression, mostly expressed in leaves and seedlings shoots, to a lower extent, in roots, but barely in flowers.

The protein resides in the cell membrane. It is found in the secreted. Its subcellular location is the extracellular space. The protein localises to the apoplast. In terms of biological role, brassicaceae-specific phytocytokine (plant endogenous peptide released into the apoplast) perceived by MIK2 in a BAK1/SERK3 and SERK4 coreceptors-dependent manner, that modulates various physiological and antimicrobial processes including growth prevention and reactive oxygen species (ROS) response regulation. Inhibits root growth and regulates root meristems. Promotes ROS production and MAPK (e.g. MPK3, MPK4 and MPK6) activation in a MIK2-dependent manner, thus leading to the up-regulation of immune-related marker genes (e.g. WRKY30, WRKY33 and CYP81F2). This chain is Serine rich endogenous peptide 10, found in Arabidopsis thaliana (Mouse-ear cress).